Consider the following 635-residue polypeptide: Cilia- and flagella-associated protein 206 (635 aa).

The protein belongs to the CFAP206 family.

The protein localises to the cytoplasm. It is found in the cytoskeleton. It localises to the cilium axoneme. Its function is as follows. May regulate cilium motility through its role in the assembly of the axonemal RS2 radial spoke. The chain is Cilia- and flagella-associated protein 206 from Tetrahymena thermophila (strain SB210).